Reading from the N-terminus, the 169-residue chain is S-ribosylhomocysteine lyase (169 aa).

Fe cation is bound by residues His-54, His-58, and Cys-128.

It belongs to the LuxS family. Homodimer. Requires Fe cation as cofactor.

The enzyme catalyses S-(5-deoxy-D-ribos-5-yl)-L-homocysteine = (S)-4,5-dihydroxypentane-2,3-dione + L-homocysteine. Functionally, involved in the synthesis of autoinducer 2 (AI-2) which is secreted by bacteria and is used to communicate both the cell density and the metabolic potential of the environment. The regulation of gene expression in response to changes in cell density is called quorum sensing. Catalyzes the transformation of S-ribosylhomocysteine (RHC) to homocysteine (HC) and 4,5-dihydroxy-2,3-pentadione (DPD). This chain is S-ribosylhomocysteine lyase, found in Shewanella baltica (strain OS223).